A 513-amino-acid chain; its full sequence is Cobyric acid synthase (513 aa).

One can recognise a GATase cobBQ-type domain in the interval 270 to 470; it reads RLRIAIVAYP…THGLFESPAV (201 aa). Residue Cys-351 is the Nucleophile of the active site. His-462 is an active-site residue.

Belongs to the CobB/CobQ family. CobQ subfamily.

Its pathway is cofactor biosynthesis; adenosylcobalamin biosynthesis. In terms of biological role, catalyzes amidations at positions B, D, E, and G on adenosylcobyrinic A,C-diamide. NH(2) groups are provided by glutamine, and one molecule of ATP is hydrogenolyzed for each amidation. The polypeptide is Cobyric acid synthase (Leptothrix cholodnii (strain ATCC 51168 / LMG 8142 / SP-6) (Leptothrix discophora (strain SP-6))).